The sequence spans 178 residues: Protein FLOWERING LOCUS T 1 (178 aa).

The protein belongs to the phosphatidylethanolamine-binding protein family. As to expression, expressed in leaves but not in shoot apex.

Functionally, involved in the regulation of vernalization and of flowering time. This is Protein FLOWERING LOCUS T 1 from Brachypodium distachyon (Purple false brome).